Here is a 323-residue protein sequence, read N- to C-terminus: o-succinylbenzoate synthase (323 aa).

Catalysis depends on lysine 134, which acts as the Proton donor. Mg(2+) is bound by residues aspartate 162, glutamate 191, and aspartate 214. Residue lysine 236 is the Proton acceptor of the active site.

It belongs to the mandelate racemase/muconate lactonizing enzyme family. MenC type 1 subfamily. A divalent metal cation is required as a cofactor.

It catalyses the reaction (1R,6R)-6-hydroxy-2-succinyl-cyclohexa-2,4-diene-1-carboxylate = 2-succinylbenzoate + H2O. Its pathway is quinol/quinone metabolism; 1,4-dihydroxy-2-naphthoate biosynthesis; 1,4-dihydroxy-2-naphthoate from chorismate: step 4/7. The protein operates within quinol/quinone metabolism; menaquinone biosynthesis. Functionally, converts 2-succinyl-6-hydroxy-2,4-cyclohexadiene-1-carboxylate (SHCHC) to 2-succinylbenzoate (OSB). This is o-succinylbenzoate synthase from Yersinia pseudotuberculosis serotype I (strain IP32953).